Consider the following 165-residue polypeptide: Crossover junction endodeoxyribonuclease RuvC (165 aa).

Residues D7, E67, and D140 contribute to the active site. 3 residues coordinate Mg(2+): D7, E67, and D140.

It belongs to the RuvC family. In terms of assembly, homodimer which binds Holliday junction (HJ) DNA. The HJ becomes 2-fold symmetrical on binding to RuvC with unstacked arms; it has a different conformation from HJ DNA in complex with RuvA. In the full resolvosome a probable DNA-RuvA(4)-RuvB(12)-RuvC(2) complex forms which resolves the HJ. Mg(2+) is required as a cofactor.

It is found in the cytoplasm. It carries out the reaction Endonucleolytic cleavage at a junction such as a reciprocal single-stranded crossover between two homologous DNA duplexes (Holliday junction).. Functionally, the RuvA-RuvB-RuvC complex processes Holliday junction (HJ) DNA during genetic recombination and DNA repair. Endonuclease that resolves HJ intermediates. Cleaves cruciform DNA by making single-stranded nicks across the HJ at symmetrical positions within the homologous arms, yielding a 5'-phosphate and a 3'-hydroxyl group; requires a central core of homology in the junction. The consensus cleavage sequence is 5'-(A/T)TT(C/G)-3'. Cleavage occurs on the 3'-side of the TT dinucleotide at the point of strand exchange. HJ branch migration catalyzed by RuvA-RuvB allows RuvC to scan DNA until it finds its consensus sequence, where it cleaves and resolves the cruciform DNA. In Thermotoga petrophila (strain ATCC BAA-488 / DSM 13995 / JCM 10881 / RKU-1), this protein is Crossover junction endodeoxyribonuclease RuvC.